A 175-amino-acid chain; its full sequence is Arginine repressor (175 aa).

The interval 1–23 (MSVSTPERGGAEQGKGPAIARTR) is disordered.

It belongs to the ArgR family.

It localises to the cytoplasm. It functions in the pathway amino-acid biosynthesis; L-arginine biosynthesis [regulation]. In terms of biological role, regulates arginine biosynthesis genes. The polypeptide is Arginine repressor (Nocardia farcinica (strain IFM 10152)).